The sequence spans 332 residues: Cytoskeleton protein RodZ (332 aa).

Residues 1–111 (MNTETTQDTT…LKKSRKKRDG (111 aa)) lie on the Cytoplasmic side of the membrane. The 53-residue stretch at 19–71 (LREARERLGLTQQTIAERLCLKITTVRDIEDGTTPADLAPTFLRGYIRSYAKL) folds into the HTH cro/C1-type domain. A DNA-binding region (H-T-H motif) is located at residues 30–49 (QQTIAERLCLKITTVRDIED). Residues 112 to 132 (WLMIITWLVVLVVLGLTGAWW) traverse the membrane as a helical; Signal-anchor for type II membrane protein segment. Residues 133–332 (WQNHQAQQAE…QVARLTLTAE (200 aa)) are Periplasmic-facing. A disordered region spans residues 149-225 (HASSMQSQTE…PSQANATQSQ (77 aa)). Polar residues-rich tracts occupy residues 151–160 (SSMQSQTEGQ) and 168–182 (SAPQETSTAGSAATP). The segment covering 190-225 (SATIAATPSTPPSSTTASSAAPSSQSPSQANATQSQ) has biased composition (low complexity).

Belongs to the RodZ family.

It localises to the cell inner membrane. Its function is as follows. Cytoskeletal protein that is involved in cell-shape control through regulation of the length of the long axis. This chain is Cytoskeleton protein RodZ, found in Pectobacterium atrosepticum (strain SCRI 1043 / ATCC BAA-672) (Erwinia carotovora subsp. atroseptica).